Here is a 258-residue protein sequence, read N- to C-terminus: Small ribosomal subunit protein uS2 (258 aa).

The protein belongs to the universal ribosomal protein uS2 family.

The protein is Small ribosomal subunit protein uS2 of Leuconostoc mesenteroides subsp. mesenteroides (strain ATCC 8293 / DSM 20343 / BCRC 11652 / CCM 1803 / JCM 6124 / NCDO 523 / NBRC 100496 / NCIMB 8023 / NCTC 12954 / NRRL B-1118 / 37Y).